The chain runs to 584 residues: Complement component C8 alpha chain (584 aa).

Positions 1–20 are cleaved as a signal peptide; the sequence is MFAVVFFILSLMTCQPGVTA. A propeptide spanning residues 21 to 30 is cleaved from the precursor; the sequence is QEKVNQRVRR. A TSP type-1 1 domain is found at 38–91; sequence TCQLSNWSEWTDCFPCQDKKYRHRSLLQPNKFGGTICSGDIWDQASCSSSTTCV. 7 disulfides stabilise this stretch: C39–C74, C50–C84, C53–C90, C96–C108, C102–C121, C115–C130, and C140–C177. The C-linked (Man) tryptophan glycan is linked to W44. In terms of domain architecture, LDL-receptor class A spans 94 to 132; that stretch reads AQCGQDFQCKETGRCLKRHLVCNGDQDCLDGSDEDDCED. L113, N116, D118, D120, D126, and E127 together coordinate Ca(2+). Residues 135–498 enclose the MACPF domain; sequence AIDEDCSQYE…QYLMEFNACR (364 aa). The next 4 beta stranded transmembrane spans lie at 248–256, 259–266, 377–384, and 390–395; these read FGVTIGIGP, SPLLVGVG, GGSLGIQY, and VGGGLS. A disulfide bridge links C375 with C399. Residue N437 is glycosylated (N-linked (GlcNAc...) asparagine). 4 cysteine pairs are disulfide-bonded: C497–C544, C499–C515, C502–C517, and C519–C528. An EGF-like domain is found at 499-529; the sequence is CGPCFNNGVPILEGTSCRCQCRLGSLGAACE. A TSP type-1 2 domain is found at 539–583; that stretch reads DGSWSCWSSWSVCRAGIQERRRECDNPAPQNGGASCPGRKVQTQA. C-linked (Man) tryptophan glycans are attached at residues W542, W545, and W548. 2 cysteine pairs are disulfide-bonded: C551–C584 and C562–C574. Positions 562 to 584 are disordered; it reads CDNPAPQNGGASCPGRKVQTQAC.

The protein belongs to the complement C6/C7/C8/C9 family. In terms of assembly, heterotrimer of 3 chains: alpha (C8A), beta (C8B) and gamma (C8G); the alpha and gamma chains are disulfide bonded. Component of the membrane attack complex (MAC), composed of complement C5b, C6, C7, C8A, C8B, C8G and multiple copies of the pore-forming subunit C9.

It is found in the secreted. The protein resides in the target cell membrane. Its activity is regulated as follows. Membrane attack complex (MAC) assembly is inhibited by CD59, thereby protecting self-cells from damage during complement activation. CD59 acts by binding to the beta-haipins of C8 (C8A and C8B), forming an intermolecular beta-sheet that prevents incorporation of the multiple copies of C9 required for complete formation of the osmolytic pore. MAC assembly is also inhibited by clusterin (CLU) chaperones that inhibit polymerization of C9. Its function is as follows. Component of the membrane attack complex (MAC), a multiprotein complex activated by the complement cascade, which inserts into a target cell membrane and forms a pore, leading to target cell membrane rupture and cell lysis. The MAC is initiated by proteolytic cleavage of C5 into complement C5b in response to the classical, alternative, lectin and GZMK complement pathways. The complement pathways consist in a cascade of proteins that leads to phagocytosis and breakdown of pathogens and signaling that strengthens the adaptive immune system. C8A, together with C8B and C8G, inserts into the target membrane, but does not form pores by itself. During MAC assembly, associates with C5b, C6 and C7 to form the C5b8 intermediate complex that inserts into the target membrane and traverses the bilayer increasing membrane rigidity. This is Complement component C8 alpha chain from Homo sapiens (Human).